Consider the following 189-residue polypeptide: Threonylcarbamoyl-AMP synthase (189 aa).

A YrdC-like domain is found at 9–189; sequence ASAQRKLSVY…IDGETGKRLR (181 aa).

Belongs to the SUA5 family. TsaC subfamily.

The protein resides in the cytoplasm. It carries out the reaction L-threonine + hydrogencarbonate + ATP = L-threonylcarbamoyladenylate + diphosphate + H2O. Required for the formation of a threonylcarbamoyl group on adenosine at position 37 (t(6)A37) in tRNAs that read codons beginning with adenine. Catalyzes the conversion of L-threonine, HCO(3)(-)/CO(2) and ATP to give threonylcarbamoyl-AMP (TC-AMP) as the acyladenylate intermediate, with the release of diphosphate. In Neisseria meningitidis serogroup C (strain 053442), this protein is Threonylcarbamoyl-AMP synthase.